Reading from the N-terminus, the 157-residue chain is Capsid protein (157 aa).

Ser-2 bears the N-acetylserine; by host mark.

Belongs to the virgaviridae capsid protein family.

The protein localises to the virion. Functionally, capsid protein self-assembles to form rod-shaped virions about 18 nm in diameter with a central canal enclosing the viral genomic RNA. The polypeptide is Capsid protein (CP) (Digitalis lanata (Grecian foxglove)).